The sequence spans 264 residues: Undecaprenyl-diphosphatase (264 aa).

6 helical membrane passes run 41–61, 82–102, 106–126, 140–160, 213–233, and 244–264; these read NLAF…VILW, YVIN…FFKD, AIFG…AALL, ISMK…LPGL, IPAL…CLAC, and KLIY…ITQL.

The protein belongs to the UppP family.

Its subcellular location is the cell inner membrane. It carries out the reaction di-trans,octa-cis-undecaprenyl diphosphate + H2O = di-trans,octa-cis-undecaprenyl phosphate + phosphate + H(+). Catalyzes the dephosphorylation of undecaprenyl diphosphate (UPP). Confers resistance to bacitracin. The sequence is that of Undecaprenyl-diphosphatase from Bacteroides thetaiotaomicron (strain ATCC 29148 / DSM 2079 / JCM 5827 / CCUG 10774 / NCTC 10582 / VPI-5482 / E50).